Consider the following 544-residue polypeptide: Probable protein kinase UbiB (544 aa).

The region spanning 123 to 501 is the Protein kinase domain; sequence DFDIKPLASA…KRQQAKGQFL (379 aa). Residues 129 to 137 and Lys152 each bind ATP; that span reads LASASIAQV. Catalysis depends on Asp287, which acts as the Proton acceptor. Residues 515–537 form a helical membrane-spanning segment; the sequence is LLTSNITVLASISAATGAAFWLF.

Belongs to the ABC1 family. UbiB subfamily.

The protein resides in the cell inner membrane. The protein operates within cofactor biosynthesis; ubiquinone biosynthesis [regulation]. Functionally, is probably a protein kinase regulator of UbiI activity which is involved in aerobic coenzyme Q (ubiquinone) biosynthesis. In Aliivibrio fischeri (strain ATCC 700601 / ES114) (Vibrio fischeri), this protein is Probable protein kinase UbiB.